The following is a 71-amino-acid chain: Large ribosomal subunit protein uL30 (71 aa).

Belongs to the universal ribosomal protein uL30 family. As to quaternary structure, part of the 50S ribosomal subunit.

The sequence is that of Large ribosomal subunit protein uL30 from Mycolicibacterium paratuberculosis (strain ATCC BAA-968 / K-10) (Mycobacterium paratuberculosis).